A 141-amino-acid chain; its full sequence is Aspartate 1-decarboxylase (141 aa).

Serine 25 serves as the catalytic Schiff-base intermediate with substrate; via pyruvic acid. Serine 25 is subject to Pyruvic acid (Ser). Threonine 57 lines the substrate pocket. Residue tyrosine 58 is the Proton donor of the active site. 73 to 75 is a binding site for substrate; the sequence is GAA. A disordered region spans residues 121–141; sequence ASAPVPGSRTERSPQAVVAGG.

The protein belongs to the PanD family. Heterooctamer of four alpha and four beta subunits. Pyruvate is required as a cofactor. Post-translationally, is synthesized initially as an inactive proenzyme, which is activated by self-cleavage at a specific serine bond to produce a beta-subunit with a hydroxyl group at its C-terminus and an alpha-subunit with a pyruvoyl group at its N-terminus.

The protein localises to the cytoplasm. The catalysed reaction is L-aspartate + H(+) = beta-alanine + CO2. It participates in cofactor biosynthesis; (R)-pantothenate biosynthesis; beta-alanine from L-aspartate: step 1/1. Catalyzes the pyruvoyl-dependent decarboxylation of aspartate to produce beta-alanine. The protein is Aspartate 1-decarboxylase of Streptomyces griseus subsp. griseus (strain JCM 4626 / CBS 651.72 / NBRC 13350 / KCC S-0626 / ISP 5235).